Reading from the N-terminus, the 308-residue chain is uncharacterized protein (308 aa).

This is an uncharacterized protein from Bacillus subtilis (strain 168).